Reading from the N-terminus, the 147-residue chain is GCCPTFWTSFGSNCYRFFAVSLTWAEGEQFCQSFSVPSRGDIDSIGHLVSIHSETEQNFVYHYFETSTKDDTTPEMWLGFNDRTTEGNFQWTDGSPNDFTAWVGSNPDNYGSGEDCTQMVMGAGLNWIDLPCSSTRHYLICKLPLWE.

The C-type lectin domain occupies 1-143 (GCCPTFWTSF…STRHYLICKL (143 aa)). Intrachain disulfides connect Cys3/Cys14, Cys31/Cys141, and Cys116/Cys132. O-linked (Hex) serine glycosylation occurs at Ser38. The Cell attachment site motif lies at 39-41 (RGD).

As to quaternary structure, homodimer; disulfide-linked. The identity of the saccharide is not reported in PubMed:3571253, and it is unlikely to be N-acetylgalactosamine. The sugar attached to Ser-38 is represented simply as Hex. As to expression, coelemic fluid.

It localises to the secreted. Role in the defense system of the organism against microorganisms. This lectin is specific for Gal-GalNAc. This is Echinoidin from Heliocidaris crassispina (Sea urchin).